Consider the following 334-residue polypeptide: Succinate receptor 1 (334 aa).

The Extracellular segment spans residues 5–31 (MAWNATCKNWLAAEAALEKYYLSIFYG). The N-linked (GlcNAc...) asparagine glycan is linked to Asn-8. A helical membrane pass occupies residues 32-52 (IEFVVGVLGNTIVVYGYIFSL). The Cytoplasmic segment spans residues 53–59 (KNWNSSN). A helical membrane pass occupies residues 60 to 80 (IYLFNLSVSDLAFLCTLPMLI). The Extracellular segment spans residues 81 to 103 (RSYANGNWIYGDVLCISNRYVLH). The cysteines at positions 95 and 172 are disulfide-linked. A helical membrane pass occupies residues 104-124 (ANLYTSILFLTFISIDRYLII). The Cytoplasmic segment spans residues 125-137 (KYPFREHLLQKKE). The helical transmembrane segment at 138–158 (FAILISLAIWVLVTLELLPIL) threads the bilayer. Over 159-185 (PLINPVITDNGTTCNDFASSGDPNYNL) the chain is Extracellular. N-linked (GlcNAc...) asparagine glycosylation is present at Asn-168. Residues 186–206 (IYSMCLTLLGFLIPLFVMCFF) form a helical membrane-spanning segment. Residues 207 to 230 (YYKIALFLKQRNRQVATALPLEKP) lie on the Cytoplasmic side of the membrane. The helical transmembrane segment at 231-251 (LNLVIMAVVIFSVLFTPYHVM) threads the bilayer. At 252-281 (RNVRIASRLGSWKQYQCTQVVINSFYIVTR) the chain is on the extracellular side. Residues 282-302 (PLAFLNSVINPVFYFLLGDHF) traverse the membrane as a helical segment. Residues 303-334 (RDMLMNQLRHNFKSLTSFSRWAHELLLSFREK) lie on the Cytoplasmic side of the membrane.

It belongs to the G-protein coupled receptor 1 family. As to expression, expressed specifically in kidney. Highly expressed in immature dendritic cells, expression rapidly downregulates after maturation. Also expressed in macrophages.

Its subcellular location is the cell membrane. In terms of biological role, g protein-coupled receptor for succinate able to mediate signaling through Gq/GNAQ or Gi/GNAI second messengers depending on the cell type and the processes regulated. Succinate-SUCNR1 signaling serves as a link between metabolic stress, inflammation and energy homeostasis. In macrophages, plays a range of immune-regulatory roles. During inflammation, succinate-SUCNR1 signaling may act as an anti-inflammatory mediator or boost inflammation depending on the inflammatory status of cells. Hyperpolarizes M2 macrophages versus M1 phenotype through Gq signaling by regulating the transcription of genes involved in immune function. In activated M1 macrophages, plays a pro-inflammatory role in response to LPS. Expressed in dendritic cells, where it is involved in the sensing of immunological danger and enhances immunity. Mediates succinate triggered intracelleular calcium mobilization, induces migratory responses and acts in synergy with Toll-like receptor ligands for the production of proinflammatory cytokines as well as an enhancement of antigen-specific activation of helper T cells. In the small intestine, mediates the activation of tuft cells by dietary succinate and triggers type 2 immunity. In adipocytes, plays an important role in the control of energy metabolism. In response to succinate, controls leptin expression in an AMPK-JNK-CEBPA-dependent as well as circadian clock-regulated manner. In muscle tissue, is expressed in non-muscle cells and coordinates muscle remodeling in response to the succinate produced during exercise training in a paracrine manner. In retina, acts as a mediator of vessel growth during retinal development. In response to succinate, regulates the production of angiogenic factors, including VEGF, by retinal ganglion neurons. The polypeptide is Succinate receptor 1 (Homo sapiens (Human)).